Reading from the N-terminus, the 185-residue chain is NAD(P)H-dependent FMN reductase PA1204 (185 aa).

Residues 13–20 (SLRSGSYN) and 81–83 (YNY) each bind FMN. Residue 115–122 (SAGRFGTA) participates in NAD(+) binding.

It belongs to the SsuE family. As to quaternary structure, homodimer. The cofactor is FMN.

In terms of biological role, has NAD(P)H-dependent FMN reductase activity. The sequence is that of NAD(P)H-dependent FMN reductase PA1204 from Pseudomonas aeruginosa (strain ATCC 15692 / DSM 22644 / CIP 104116 / JCM 14847 / LMG 12228 / 1C / PRS 101 / PAO1).